A 1341-amino-acid polypeptide reads, in one-letter code: DNA-directed RNA polymerase subunit Rpo1N (1341 aa).

Residues Cys-62, Cys-65, Cys-72, His-75, Cys-102, Cys-105, Cys-149, and Cys-152 each contribute to the Zn(2+) site. Residues Asp-918, Asp-920, and Asp-922 each coordinate Mg(2+).

The protein belongs to the RNA polymerase beta' chain family. Part of the RNA polymerase complex. It depends on Mg(2+) as a cofactor. The cofactor is Zn(2+). In terms of processing, this protein undergoes a protein self splicing that involves a post-translational excision of the intervening region (intein) followed by peptide ligation.

The protein resides in the cytoplasm. The enzyme catalyses RNA(n) + a ribonucleoside 5'-triphosphate = RNA(n+1) + diphosphate. In terms of biological role, DNA-dependent RNA polymerase (RNAP) catalyzes the transcription of DNA into RNA using the four ribonucleoside triphosphates as substrates. Forms the clamp head domain. This is DNA-directed RNA polymerase subunit Rpo1N from Methanocaldococcus jannaschii (strain ATCC 43067 / DSM 2661 / JAL-1 / JCM 10045 / NBRC 100440) (Methanococcus jannaschii).